Consider the following 89-residue polypeptide: Small ribosomal subunit protein uS14A (89 aa).

The protein belongs to the universal ribosomal protein uS14 family. As to quaternary structure, part of the 30S ribosomal subunit. Contacts proteins S3 and S10.

Functionally, binds 16S rRNA, required for the assembly of 30S particles and may also be responsible for determining the conformation of the 16S rRNA at the A site. This chain is Small ribosomal subunit protein uS14A, found in Streptococcus equi subsp. zooepidemicus (strain MGCS10565).